A 406-amino-acid polypeptide reads, in one-letter code: Interactor protein for cytohesin exchange factors 1 (406 aa).

A PH domain is found at 13–112 (HADCQGWLYK…WLNKLGFAVT (100 aa)). Disordered regions lie at residues 118–173 (TKDE…FSSL), 228–285 (CRVS…EDDE), and 383–406 (PQDP…ENSL). Residues 123–134 (CYSESEQEDPET) show a composition bias toward acidic residues. Positions 144-160 (ASATSSPVAARRASSSS) are enriched in low complexity. Residues 228 to 239 (CRVSENSSTTPE) show a composition bias toward polar residues. A compositionally biased stretch (low complexity) spans 243–259 (LNSLSSDDTSSLNNSQD). Residues 272 to 285 (MTDRDEIKSSEDDE) show a composition bias toward basic and acidic residues. The interval 285 to 406 (EMEKLYKSLE…TSSDCVENSL (122 aa)) is necessary for interaction with PSCD2 and to translocate to the plasma membrane. A compositionally biased stretch (polar residues) spans 392–406 (EIMNPTSSDCVENSL).

As to quaternary structure, interacts with guanine-nucleotide exchange factors PSCD1, PSCD2, PSCD3 and PSCD4. Expressed in brain, spleen, lung, testis and kidney.

It is found in the cytoplasm. The protein localises to the cell membrane. In terms of biological role, enhances the promotion of guanine-nucleotide exchange by PSCD2 on ARF6 in a concentration-dependent manner. The protein is Interactor protein for cytohesin exchange factors 1 (Ipcef1) of Rattus norvegicus (Rat).